Consider the following 665-residue polypeptide: Glycine--tRNA ligase beta subunit (665 aa).

Belongs to the class-II aminoacyl-tRNA synthetase family. In terms of assembly, tetramer of two alpha and two beta subunits.

It localises to the cytoplasm. It catalyses the reaction tRNA(Gly) + glycine + ATP = glycyl-tRNA(Gly) + AMP + diphosphate. The sequence is that of Glycine--tRNA ligase beta subunit (glyS) from Rickettsia prowazekii (strain Madrid E).